Here is a 333-residue protein sequence, read N- to C-terminus: tRNA N6-adenosine threonylcarbamoyltransferase (333 aa).

The Fe cation site is built by histidine 118 and histidine 122. Substrate-binding positions include 140–144 (VVSGG), aspartate 173, glycine 186, and asparagine 274. Residue aspartate 298 participates in Fe cation binding.

The protein belongs to the KAE1 / TsaD family. The cofactor is Fe(2+).

The protein resides in the cytoplasm. It carries out the reaction L-threonylcarbamoyladenylate + adenosine(37) in tRNA = N(6)-L-threonylcarbamoyladenosine(37) in tRNA + AMP + H(+). Functionally, required for the formation of a threonylcarbamoyl group on adenosine at position 37 (t(6)A37) in tRNAs that read codons beginning with adenine. Is involved in the transfer of the threonylcarbamoyl moiety of threonylcarbamoyl-AMP (TC-AMP) to the N6 group of A37, together with TsaE and TsaB. TsaD likely plays a direct catalytic role in this reaction. The chain is tRNA N6-adenosine threonylcarbamoyltransferase from Deinococcus geothermalis (strain DSM 11300 / CIP 105573 / AG-3a).